Reading from the N-terminus, the 641-residue chain is Probable potassium transport system protein Kup (641 aa).

The next 12 membrane-spanning stretches (helical) occupy residues 29–49 (ISLAALGVVFGDIGTSPLYAI), 66–86 (ILGVLSLLFWALILIVSLKYL), 119–139 (WVLVSIGLFGASVLLGEAMIT), 156–176 (PAFADMVIPATVVILAGLFLF), 185–205 (GALFGPIILLWFFCLGTLGII), 231–251 (LHGFLVLGAVFLAVTGAEALY), 266–286 (WVLFVLPALLLNYFGQGAFLL), 298–318 (ALVPSWAMIPMVLLATVATVI), 356–376 (IYVPAANWALMAATIGLVLGF), 384–404 (AAYGASMTTTMLISTILFFFV), 415–435 (VLWALVSLFAVVDLSFFGASM), and 438–458 (LFHGAWFPLAVGLLMFTLMNT).

Belongs to the HAK/KUP transporter (TC 2.A.72) family.

The protein localises to the cell inner membrane. The catalysed reaction is K(+)(in) + H(+)(in) = K(+)(out) + H(+)(out). Transport of potassium into the cell. Likely operates as a K(+):H(+) symporter. In Chlorobium phaeovibrioides (strain DSM 265 / 1930) (Prosthecochloris vibrioformis (strain DSM 265)), this protein is Probable potassium transport system protein Kup.